Reading from the N-terminus, the 475-residue chain is Probable proline--tRNA ligase, mitochondrial (475 aa).

Residues 1–29 (MEGLLTRCRTLSALATCSLRHSRCIVRKC) constitute a mitochondrion transit peptide.

The protein belongs to the class-II aminoacyl-tRNA synthetase family.

The protein localises to the mitochondrion matrix. It catalyses the reaction tRNA(Pro) + L-proline + ATP = L-prolyl-tRNA(Pro) + AMP + diphosphate. Functionally, mitochondrial aminoacyl-tRNA synthetase that catalyzes the specific attachment of the proline amino acid (aa) to the homologous transfer RNA (tRNA), further participating in protein synthesis. The reaction occurs in a two steps: proline is first activated by ATP to form Pro-AMP and then transferred to the acceptor end of tRNA(Pro). The chain is Probable proline--tRNA ligase, mitochondrial (Pars2) from Rattus norvegicus (Rat).